The sequence spans 390 residues: Purine permease 21 (390 aa).

The tract at residues 12-34 (QQGKEPIPTDQDERSSVSGSQTK) is disordered. 10 helical membrane-spanning segments follow: residues 44–64 (WLRVAIYTFFVISGQSVATIL), 78–98 (LATVVQLVGFPILLPYHLLSV), 118–138 (LVYIVLGLLVGAACYLYSIGL), 140–160 (YLPVSTLSLICASQLAFTAFF), 169–189 (LTPIILNSLFLLTISSTLLAF), 204–224 (YVKGFVCTVGASAGFGLLLSL), 241–261 (VINMIIYMSLVASCVSVVGLF), 287–307 (LVWTAVTWQVFSIGCTGLIFE), 312–332 (FSNAISALGLPVVPILAVIIF), and 336–356 (MNGLKVISMILAIWGFVSYVY). Residues 367 to 390 (KSNEIPTTESPDRPEAEGSSEQSK) form a disordered region.

This sequence belongs to the purine permeases (TC 2.A.7.14) family. As to expression, expressed in mesophyll cells.

Its subcellular location is the membrane. The polypeptide is Purine permease 21 (Arabidopsis thaliana (Mouse-ear cress)).